The following is a 357-amino-acid chain: Ketoreductase CTB6 (357 aa).

Tyr-172 contacts NADP(+).

This sequence belongs to the NAD(P)-dependent epimerase/dehydratase family. Dihydroflavonol-4-reductase subfamily.

The protein operates within mycotoxin biosynthesis. Functionally, ketoreductase; part of the gene cluster that mediates the biosynthesis of cercosporin, a light-activated, non-host-selective toxin. The perylenequinone chromophore of cercosporin absorbs light energy to attain an electronically-activated triplet state and produces active oxygen species such as the hydroxyl radical, superoxide, hydrogen peroxide or singlet oxygen upon reaction with oxygen molecules. These reactive oxygen species cause damage to various cellular components including lipids, proteins and nucleic acids. The first step of cercosporin biosynthesis is performed by the polyketide synthase CTB1 which catalyzes the formation of nor-toralactone. The starter unit acyltransferase (SAT) domain of CTB1 initiates polyketide extension by the selective utilization of acetyl-CoA, which is elongated to the heptaketide in the beta-ketoacyl synthase (KS) domain by successive condensations with six malonyl units introduced by the malonyl acyltransferase (MAT) domain. The product template (PT) domain catalyzes C4-C9 and C2-C11 aldol cyclizations and dehydrations to a trihydroxynaphthalene, which is thought to be delivered to the thioesterase (TE) domain for product release. The bifunctional enzyme CTB3 then methylates nor-toralactone to toralactone before conducting an unusual oxidative aromatic ring opening. The O-methyltransferase CTB2 further methylates the nascent OH-6 of the CBT3 product, blocking further oxidation at this site before the reductase CTB6 reduces the 2-oxopropyl ketone at position C7, giving naphthalene. The FAD-dependent monooxygenase CTB5 in concert with the multicopper oxidase CTB12 are responsible for homodimerization of naphthalene with CTB7 installing the dioxepine moiety, finally producing cercosporin. The fasciclin domain-containing protein CTB11 might act with CTB5 and CTB12 whereas the roles of CTB9 and CTB10 have still to be elucidated. In Cercospora beticola (Sugarbeet leaf spot fungus), this protein is Ketoreductase CTB6.